A 122-amino-acid chain; its full sequence is Large ribosomal subunit protein uL18 (122 aa).

This sequence belongs to the universal ribosomal protein uL18 family. As to quaternary structure, part of the 50S ribosomal subunit; part of the 5S rRNA/L5/L18/L25 subcomplex. Contacts the 5S and 23S rRNAs.

This is one of the proteins that bind and probably mediate the attachment of the 5S RNA into the large ribosomal subunit, where it forms part of the central protuberance. The chain is Large ribosomal subunit protein uL18 from Dictyoglomus turgidum (strain DSM 6724 / Z-1310).